The following is a 145-amino-acid chain: 3-hydroxyacyl-[acyl-carrier-protein] dehydratase FabZ (145 aa).

Histidine 51 is a catalytic residue.

The protein belongs to the thioester dehydratase family. FabZ subfamily.

The protein localises to the cytoplasm. It carries out the reaction a (3R)-hydroxyacyl-[ACP] = a (2E)-enoyl-[ACP] + H2O. Involved in unsaturated fatty acids biosynthesis. Catalyzes the dehydration of short chain beta-hydroxyacyl-ACPs and long chain saturated and unsaturated beta-hydroxyacyl-ACPs. The protein is 3-hydroxyacyl-[acyl-carrier-protein] dehydratase FabZ of Staphylococcus haemolyticus (strain JCSC1435).